We begin with the raw amino-acid sequence, 556 residues long: Arginine--tRNA ligase (556 aa).

The 'HIGH' region signature appears at 132–142; sequence ANPTGPIHLGG.

Belongs to the class-I aminoacyl-tRNA synthetase family. As to quaternary structure, monomer.

It localises to the cytoplasm. The enzyme catalyses tRNA(Arg) + L-arginine + ATP = L-arginyl-tRNA(Arg) + AMP + diphosphate. The polypeptide is Arginine--tRNA ligase (Kocuria rhizophila (strain ATCC 9341 / DSM 348 / NBRC 103217 / DC2201)).